The chain runs to 101 residues: Small ribosomal subunit protein uS14 (101 aa).

It belongs to the universal ribosomal protein uS14 family. In terms of assembly, part of the 30S ribosomal subunit. Contacts proteins S3 and S10.

Functionally, binds 16S rRNA, required for the assembly of 30S particles and may also be responsible for determining the conformation of the 16S rRNA at the A site. The chain is Small ribosomal subunit protein uS14 from Stutzerimonas stutzeri (strain A1501) (Pseudomonas stutzeri).